A 398-amino-acid chain; its full sequence is Subtilisin-like protease CPC735_015300 (398 aa).

Residues 1 to 19 (MGFIKTLSLSLAAASAANA) form the signal peptide. Positions 20-116 (AKILSPSRPD…IEHDHVVRLT (97 aa)) are excised as a propeptide. Positions 35–115 (QYIVVMKDGV…FIEHDHVVRL (81 aa)) constitute an Inhibitor I9 domain. The region spanning 126–398 (TWGLGRVSHQ…NKLTYNGNGQ (273 aa)) is the Peptidase S8 domain. Residues aspartate 158 and histidine 189 each act as charge relay system in the active site. Asparagine 250 is a glycosylation site (N-linked (GlcNAc...) asparagine). The active-site Charge relay system is serine 344. N-linked (GlcNAc...) asparagine glycosylation occurs at asparagine 362.

It belongs to the peptidase S8 family.

The protein resides in the secreted. Secreted subtilisin-like serine protease with keratinolytic activity that contributes to pathogenicity. The sequence is that of Subtilisin-like protease CPC735_015300 from Coccidioides posadasii (strain C735) (Valley fever fungus).